A 655-amino-acid polypeptide reads, in one-letter code: p-hydroxybenzoic acid efflux pump subunit AaeB (655 aa).

11 helical membrane passes run 13–33, 38–58, 69–89, 93–113, 121–141, 152–172, 370–390, 407–427, 431–451, 459–479, and 482–502; these read FAVK…HFQL, WAVL…GGEP, LRII…IAMI, LLMI…SSLV, WGLA…EPLL, EIVI…PRSI, LFWL…IAVV, FIYG…VIIP, QSML…GIEV, MGAL…TFHF, and FLDS…VILL.

It belongs to the aromatic acid exporter ArAE (TC 2.A.85) family.

The protein localises to the cell inner membrane. Functionally, forms an efflux pump with AaeA. Could function as a metabolic relief valve, allowing to eliminate certain compounds when they accumulate to high levels in the cell. This is p-hydroxybenzoic acid efflux pump subunit AaeB from Shigella boydii serotype 18 (strain CDC 3083-94 / BS512).